Consider the following 660-residue polypeptide: Translation factor GUF1 homolog, mitochondrial (660 aa).

A tr-type G domain is found at 62-243 (EKIRNFSIIA…TIIEKIPPPT (182 aa)). GTP contacts are provided by residues 71 to 78 (AHIDHGKS), 136 to 140 (DTPGH), and 190 to 193 (NKID).

The protein belongs to the TRAFAC class translation factor GTPase superfamily. Classic translation factor GTPase family. LepA subfamily.

Its subcellular location is the mitochondrion inner membrane. It catalyses the reaction GTP + H2O = GDP + phosphate + H(+). Its function is as follows. Promotes mitochondrial protein synthesis. May act as a fidelity factor of the translation reaction, by catalyzing a one-codon backward translocation of tRNAs on improperly translocated ribosomes. Binds to mitochondrial ribosomes in a GTP-dependent manner. In Trichoplax adhaerens (Trichoplax reptans), this protein is Translation factor GUF1 homolog, mitochondrial.